The sequence spans 227 residues: PKHD-type hydroxylase BamMC406_4714 (227 aa).

Residues 78 to 178 form the Fe2OG dioxygenase domain; it reads KVFPPLFNRY…RVASFFWIQS (101 aa). Fe cation-binding residues include His-96, Asp-98, and His-159. Position 169 (Arg-169) interacts with 2-oxoglutarate.

Fe(2+) serves as cofactor. Requires L-ascorbate as cofactor.

The polypeptide is PKHD-type hydroxylase BamMC406_4714 (Burkholderia ambifaria (strain MC40-6)).